A 278-amino-acid chain; its full sequence is Elongation factor Ts (278 aa).

The segment at 82-85 (TDFV) is involved in Mg(2+) ion dislocation from EF-Tu.

It belongs to the EF-Ts family.

It localises to the cytoplasm. Functionally, associates with the EF-Tu.GDP complex and induces the exchange of GDP to GTP. It remains bound to the aminoacyl-tRNA.EF-Tu.GTP complex up to the GTP hydrolysis stage on the ribosome. This chain is Elongation factor Ts (tsf), found in Streptomyces coelicolor (strain ATCC BAA-471 / A3(2) / M145).